The following is a 79-amino-acid chain: Acyl carrier protein (79 aa).

The region spanning 2-77 is the Carrier domain; the sequence is ADFEARVKEI…SAIDYVKTHV (76 aa). Serine 37 is modified (O-(pantetheine 4'-phosphoryl)serine).

Belongs to the acyl carrier protein (ACP) family. 4'-phosphopantetheine is transferred from CoA to a specific serine of apo-ACP by AcpS. This modification is essential for activity because fatty acids are bound in thioester linkage to the sulfhydryl of the prosthetic group.

It localises to the cytoplasm. It functions in the pathway lipid metabolism; fatty acid biosynthesis. In terms of biological role, carrier of the growing fatty acid chain in fatty acid biosynthesis. The sequence is that of Acyl carrier protein from Endomicrobium trichonymphae.